We begin with the raw amino-acid sequence, 790 residues long: Vacuolar protein sorting-associated protein 35B (790 aa).

Belongs to the VPS35 family. As to quaternary structure, component of the retromer complex which consists of VPS29 (MAG1), VPS26 (VPS26A or VPS26B), VPS35 (VPS35A or VPS35B or VPS35C), VPS5/17 (SNX1 or SNX2A or SNX2B). Component of a retromer subcomplex consisting of VPS29 (MAG1), VPS26 (VPS26A or VPS26B), VPS35 (VPS35A or VPS35B or VPS35C). Expressed in siliques and maturing seeds (at protein level).

The protein resides in the cytoplasm. The protein localises to the endosome membrane. Its subcellular location is the prevacuolar compartment membrane. It is found in the golgi apparatus. It localises to the trans-Golgi network membrane. Plays a role in vesicular protein sorting. Component of the membrane-associated retromer complex which is essential in endosome-to-Golgi retrograde transport. Also involved in the efficient sorting of seed storage proteins globulin 12S and albumin 2S. The VPS29-VPS26-VPS35 subcomplex may be involved in recycling of specific cargos from endosome to the plasma membrane. The sequence is that of Vacuolar protein sorting-associated protein 35B (VPS35B) from Arabidopsis thaliana (Mouse-ear cress).